A 150-amino-acid polypeptide reads, in one-letter code: Large ribosomal subunit protein bL9 (150 aa).

The protein belongs to the bacterial ribosomal protein bL9 family.

Functionally, binds to the 23S rRNA. The polypeptide is Large ribosomal subunit protein bL9 (Streptococcus pyogenes serotype M5 (strain Manfredo)).